The sequence spans 97 residues: uncharacterized protein (97 aa).

The segment at 38–97 is disordered; the sequence is TSPPDWNKFSGKVSINEPTTSKSKSKSTSTSTSTSTSTSTSTSTSSSTSSTSSTTSSINK. Residues 56-97 are compositionally biased toward low complexity; sequence TTSKSKSKSTSTSTSTSTSTSTSTSTSSSTSSTSSTTSSINK.

This is an uncharacterized protein from Dictyostelium discoideum (Social amoeba).